We begin with the raw amino-acid sequence, 193 residues long: MNAIPYVVEQTKLGERSYDIYSRLLKDRIIIIGSEINDQVASSVVAQLLFLEAEDAEKDIFLYINSPGGSTTAGFAILDTMNLIKPDVQTLCMGFAASFGALLLLSGAKGKRFALPNSEIMIHQPLGGAKGQATEIEITAKRILKLKHDINKMIAEKTGQPIERVAHDTERDYFMTAEEAKAYGIVDDVVTKK.

Ser-98 acts as the Nucleophile in catalysis. The active site involves His-123.

This sequence belongs to the peptidase S14 family. In terms of assembly, fourteen ClpP subunits assemble into 2 heptameric rings which stack back to back to give a disk-like structure with a central cavity, resembling the structure of eukaryotic proteasomes.

Its subcellular location is the cytoplasm. The enzyme catalyses Hydrolysis of proteins to small peptides in the presence of ATP and magnesium. alpha-casein is the usual test substrate. In the absence of ATP, only oligopeptides shorter than five residues are hydrolyzed (such as succinyl-Leu-Tyr-|-NHMec, and Leu-Tyr-Leu-|-Tyr-Trp, in which cleavage of the -Tyr-|-Leu- and -Tyr-|-Trp bonds also occurs).. Cleaves peptides in various proteins in a process that requires ATP hydrolysis. Has a chymotrypsin-like activity. Plays a major role in the degradation of misfolded proteins. In Bacillus cereus (strain ZK / E33L), this protein is ATP-dependent Clp protease proteolytic subunit 1.